Here is a 517-residue protein sequence, read N- to C-terminus: Crotonobetaine/carnitine--CoA ligase (517 aa).

The protein belongs to the ATP-dependent AMP-binding enzyme family.

It carries out the reaction 4-(trimethylamino)butanoate + ATP + CoA = 4-(trimethylamino)butanoyl-CoA + AMP + diphosphate. The catalysed reaction is crotonobetaine + ATP + CoA = crotonobetainyl-CoA + AMP + diphosphate. The enzyme catalyses (R)-carnitine + ATP + CoA = (R)-carnitinyl-CoA + AMP + diphosphate. Its pathway is amine and polyamine metabolism; carnitine metabolism. Its function is as follows. Catalyzes the transfer of CoA to carnitine, generating the initial carnitinyl-CoA needed for the CaiB reaction cycle. Also has activity toward crotonobetaine and gamma-butyrobetaine. In Salmonella arizonae (strain ATCC BAA-731 / CDC346-86 / RSK2980), this protein is Crotonobetaine/carnitine--CoA ligase.